The sequence spans 307 residues: Protoheme IX farnesyltransferase (307 aa).

Helical transmembrane passes span 31 to 51 (VTQL…PGMV), 55 to 75 (VLIG…AINC), 103 to 123 (TLVF…VYAN), 125 to 145 (LTMW…TILL), 153 to 173 (IVIG…AVAG), 179 to 199 (AWFL…ALAL), 223 to 243 (LLHI…PFVY), 246 to 266 (SGYI…AYAW), and 285 to 305 (ILYL…KFVP).

It belongs to the UbiA prenyltransferase family. Protoheme IX farnesyltransferase subfamily.

Its subcellular location is the cell inner membrane. It catalyses the reaction heme b + (2E,6E)-farnesyl diphosphate + H2O = Fe(II)-heme o + diphosphate. The protein operates within porphyrin-containing compound metabolism; heme O biosynthesis; heme O from protoheme: step 1/1. In terms of biological role, converts heme B (protoheme IX) to heme O by substitution of the vinyl group on carbon 2 of heme B porphyrin ring with a hydroxyethyl farnesyl side group. The protein is Protoheme IX farnesyltransferase of Cupriavidus necator (strain ATCC 17699 / DSM 428 / KCTC 22496 / NCIMB 10442 / H16 / Stanier 337) (Ralstonia eutropha).